The sequence spans 361 residues: Chorismate synthase (361 aa).

NADP(+) contacts are provided by Arg48 and Arg54. Residues 125 to 127, 238 to 239, Gly278, 293 to 297, and Arg319 each bind FMN; these read RSS, NA, and KPTSS.

Belongs to the chorismate synthase family. As to quaternary structure, homotetramer. FMNH2 serves as cofactor.

The enzyme catalyses 5-O-(1-carboxyvinyl)-3-phosphoshikimate = chorismate + phosphate. It participates in metabolic intermediate biosynthesis; chorismate biosynthesis; chorismate from D-erythrose 4-phosphate and phosphoenolpyruvate: step 7/7. Its function is as follows. Catalyzes the anti-1,4-elimination of the C-3 phosphate and the C-6 proR hydrogen from 5-enolpyruvylshikimate-3-phosphate (EPSP) to yield chorismate, which is the branch point compound that serves as the starting substrate for the three terminal pathways of aromatic amino acid biosynthesis. This reaction introduces a second double bond into the aromatic ring system. This is Chorismate synthase from Salmonella paratyphi A (strain ATCC 9150 / SARB42).